A 588-amino-acid chain; its full sequence is UDP-N-acetylmuramate--L-alanine ligase (588 aa).

119 to 125 (GSHGKST) contacts ATP. Low complexity predominate over residues 344 to 371 (VPAAAGAAAAPPVRRDPATAAAAATTAP). Positions 344–411 (VPAAAGAAAA…APAAGPDHAA (68 aa)) are disordered. The span at 372–381 (IGPPDSPPPT) shows a compositional bias: pro residues. Over residues 382-411 (GIALPRAAPPAVDAPVAATPAPAAGPDHAA) the composition is skewed to low complexity.

This sequence belongs to the MurCDEF family.

Its subcellular location is the cytoplasm. The enzyme catalyses UDP-N-acetyl-alpha-D-muramate + L-alanine + ATP = UDP-N-acetyl-alpha-D-muramoyl-L-alanine + ADP + phosphate + H(+). Its pathway is cell wall biogenesis; peptidoglycan biosynthesis. Its function is as follows. Cell wall formation. The polypeptide is UDP-N-acetylmuramate--L-alanine ligase (Frankia alni (strain DSM 45986 / CECT 9034 / ACN14a)).